Reading from the N-terminus, the 384-residue chain is Putative 8-amino-7-oxononanoate synthase (384 aa).

Arg-19 is a binding site for substrate. 106–107 is a pyridoxal 5'-phosphate binding site; sequence GY. Substrate is bound at residue His-131. Pyridoxal 5'-phosphate is bound by residues Ser-177, 202–205, and 233–236; these read DDAH and TLSK. An N6-(pyridoxal phosphate)lysine modification is found at Lys-236.

This sequence belongs to the class-II pyridoxal-phosphate-dependent aminotransferase family. BioF subfamily. Homodimer. Pyridoxal 5'-phosphate serves as cofactor.

It catalyses the reaction 6-carboxyhexanoyl-[ACP] + L-alanine + H(+) = (8S)-8-amino-7-oxononanoate + holo-[ACP] + CO2. It functions in the pathway cofactor biosynthesis; biotin biosynthesis. Functionally, catalyzes the decarboxylative condensation of pimeloyl-[acyl-carrier protein] and L-alanine to produce 8-amino-7-oxononanoate (AON), [acyl-carrier protein], and carbon dioxide. In Desulforudis audaxviator (strain MP104C), this protein is Putative 8-amino-7-oxononanoate synthase (bioF).